Here is a 144-residue protein sequence, read N- to C-terminus: Cytochrome c oxidase subunit 4 isoform 1, mitochondrial (144 aa).

The Mitochondrial matrix portion of the chain corresponds to 1–73 (SVVKSEDFSL…SFAEMNRGSN (73 aa)). Lys4 carries the N6-acetyllysine; alternate modification. Lys4 is modified (N6-succinyllysine; alternate). Lys28 bears the N6-acetyllysine mark. Phosphoserine is present on residues Ser31 and Ser33. Position 35 is an N6-acetyllysine; alternate (Lys35). N6-succinyllysine; alternate is present on Lys35. Lys42 is subject to N6-acetyllysine. A helical membrane pass occupies residues 74–99 (EWKTVVGGAMFFIGFTALVIMWQKHY). Residues 100-144 (VYGPLPQSFDKEWVAKQTKRMLDMKVNPIQGLASKWDYEKNEWKK) are Mitochondrial intermembrane-facing.

The protein belongs to the cytochrome c oxidase IV family. Component of the cytochrome c oxidase (complex IV, CIV), a multisubunit enzyme composed of 14 subunits. The complex is composed of a catalytic core of 3 subunits MT-CO1, MT-CO2 and MT-CO3, encoded in the mitochondrial DNA, and 11 supernumerary subunits COX4I, COX5A, COX5B, COX6A, COX6B, COX6C, COX7A, COX7B, COX7C, COX8 and NDUFA4, which are encoded in the nuclear genome. The complex exists as a monomer or a dimer and forms supercomplexes (SCs) in the inner mitochondrial membrane with NADH-ubiquinone oxidoreductase (complex I, CI) and ubiquinol-cytochrome c oxidoreductase (cytochrome b-c1 complex, complex III, CIII), resulting in different assemblies (supercomplex SCI(1)III(2)IV(1) and megacomplex MCI(2)III(2)IV(2)). Interacts with PHB2; the interaction decreases in absence of SPHK2. Interacts with AFG1L. Interacts with ABCB7; this interaction allows the regulation of cellular iron homeostasis and cellular reactive oxygen species (ROS) levels in cardiomyocytes. Interacts with FLVCR2; this interaction occurs in the absence of heme and is disrupted upon heme binding. Interacts with IRGC.

It is found in the mitochondrion inner membrane. The protein operates within energy metabolism; oxidative phosphorylation. Component of the cytochrome c oxidase, the last enzyme in the mitochondrial electron transport chain which drives oxidative phosphorylation. The respiratory chain contains 3 multisubunit complexes succinate dehydrogenase (complex II, CII), ubiquinol-cytochrome c oxidoreductase (cytochrome b-c1 complex, complex III, CIII) and cytochrome c oxidase (complex IV, CIV), that cooperate to transfer electrons derived from NADH and succinate to molecular oxygen, creating an electrochemical gradient over the inner membrane that drives transmembrane transport and the ATP synthase. Cytochrome c oxidase is the component of the respiratory chain that catalyzes the reduction of oxygen to water. Electrons originating from reduced cytochrome c in the intermembrane space (IMS) are transferred via the dinuclear copper A center (CU(A)) of subunit 2 and heme A of subunit 1 to the active site in subunit 1, a binuclear center (BNC) formed by heme A3 and copper B (CU(B)). The BNC reduces molecular oxygen to 2 water molecules using 4 electrons from cytochrome c in the IMS and 4 protons from the mitochondrial matrix. The polypeptide is Cytochrome c oxidase subunit 4 isoform 1, mitochondrial (COX4I1) (Gorilla gorilla gorilla (Western lowland gorilla)).